Reading from the N-terminus, the 864-residue chain is DNA mismatch repair protein MutS (864 aa).

607 to 614 (GPNMGGKS) is a binding site for ATP.

It belongs to the DNA mismatch repair MutS family.

This protein is involved in the repair of mismatches in DNA. It is possible that it carries out the mismatch recognition step. This protein has a weak ATPase activity. This is DNA mismatch repair protein MutS from Neisseria meningitidis serogroup A / serotype 4A (strain DSM 15465 / Z2491).